Here is a 229-residue protein sequence, read N- to C-terminus: Protein FAM3C (229 aa).

The signal sequence occupies residues 1–24; it reads MRIAGAIKFVIAVALFLLTFYVIS. Cystine bridges form between cysteine 59–cysteine 87 and cysteine 65–cysteine 222. Residues 68–226 form the GG-type lectin domain; that stretch reads KHFAFKIASG…VEMEGCIPQK (159 aa).

This sequence belongs to the FAM3 family.

It localises to the secreted. In terms of biological role, involved in retinal laminar formation. This Xenopus tropicalis (Western clawed frog) protein is Protein FAM3C (fam3c).